Here is a 344-residue protein sequence, read N- to C-terminus: Succinylglutamate desuccinylase (344 aa).

Zn(2+)-binding residues include His-63, Glu-66, and His-160. The active site involves Glu-224.

It belongs to the AspA/AstE family. Succinylglutamate desuccinylase subfamily. Zn(2+) is required as a cofactor.

The catalysed reaction is N-succinyl-L-glutamate + H2O = L-glutamate + succinate. It functions in the pathway amino-acid degradation; L-arginine degradation via AST pathway; L-glutamate and succinate from L-arginine: step 5/5. Transforms N(2)-succinylglutamate into succinate and glutamate. This chain is Succinylglutamate desuccinylase, found in Shewanella sp. (strain W3-18-1).